Consider the following 650-residue polypeptide: Acetyl-coenzyme A synthetase (650 aa).

CoA is bound by residues 191–194 (RGGR), T311, and N335. ATP contacts are provided by residues 387 to 389 (GEP), 411 to 416 (DTWWQT), D501, and R516. CoA is bound at residue S524. R527 contacts ATP. Mg(2+) contacts are provided by V538, H540, and I543. Position 585 (R585) interacts with CoA. N6-acetyllysine is present on K610.

The protein belongs to the ATP-dependent AMP-binding enzyme family. Mg(2+) serves as cofactor. Acetylated. Deacetylation by the SIR2-homolog deacetylase activates the enzyme.

The catalysed reaction is acetate + ATP + CoA = acetyl-CoA + AMP + diphosphate. Its function is as follows. Catalyzes the conversion of acetate into acetyl-CoA (AcCoA), an essential intermediate at the junction of anabolic and catabolic pathways. AcsA undergoes a two-step reaction. In the first half reaction, AcsA combines acetate with ATP to form acetyl-adenylate (AcAMP) intermediate. In the second half reaction, it can then transfer the acetyl group from AcAMP to the sulfhydryl group of CoA, forming the product AcCoA. This is Acetyl-coenzyme A synthetase from Vibrio vulnificus (strain YJ016).